The following is a 313-amino-acid chain: Ribosomal RNA small subunit methyltransferase H (313 aa).

S-adenosyl-L-methionine-binding positions include 35–37 (GGH), Asp55, Phe80, Asp102, and Gln109.

Belongs to the methyltransferase superfamily. RsmH family.

The protein resides in the cytoplasm. It catalyses the reaction cytidine(1402) in 16S rRNA + S-adenosyl-L-methionine = N(4)-methylcytidine(1402) in 16S rRNA + S-adenosyl-L-homocysteine + H(+). In terms of biological role, specifically methylates the N4 position of cytidine in position 1402 (C1402) of 16S rRNA. The sequence is that of Ribosomal RNA small subunit methyltransferase H from Shewanella woodyi (strain ATCC 51908 / MS32).